Here is a 737-residue protein sequence, read N- to C-terminus: ARMADILLO BTB ARABIDOPSIS PROTEIN 1 (737 aa).

ARM repeat units lie at residues 112-154 (DENV…KDCA), 165-212 (PGYQ…NIAH), 215-254 (PRIKTNIRVEGGIAPLVELLNFPDVKVQRAAAGALRTVSF), 257-296 (DENKSQIVELNALPTLVLMLQSQDSTVHGEAIGAIGNLVH), 299-338 (PDIKKEVIRAGALQPVIGLLSSTCLETQREAALLIGQFAA), 341-380 (SDCKVHIAQRGAITPLIKMLESSDEQVVEMSAFALGRLAQ), 382-421 (AHNQAGIAHRGGIISLLNLLDVKTGSVQHNAAFALYGLAD), 456-495 (LKRLQNKIHGPVLNQLLYLMRTAEKTVQIRIALALAHLCD), and 497-536 (KDGKLIFIDNNGVEFLLELLYFSSNKQQRYSSSALYELAK). In terms of domain architecture, BTB spans 568–635 (SDVTFLIDGK…IYSGRINIAK (68 aa)).

Forms a heterodimeric complex with TCP24. Interacts with the origin recognition complex (preRC) components ORC1A, ORC1B, CDT1A and CDT1B. Interacts with DUF7/AIP1. As to expression, weakly expressed in the emerging lateral roots and mainly expressed in the shoot apex, young leaves and flower buds.

Its subcellular location is the nucleus. Its pathway is protein modification; protein ubiquitination. Functionally, may act as a substrate-specific adapter of an E3 ubiquitin-protein ligase complex (CUL3-RBX1-BTB) which mediates the ubiquitination and subsequent proteasomal degradation of target proteins. In association with TCP24, exerts a negative role in cell proliferation in leaves, possibly by inhibiting mitotic DNA replication. In Arabidopsis thaliana (Mouse-ear cress), this protein is ARMADILLO BTB ARABIDOPSIS PROTEIN 1 (ABAP1).